The chain runs to 563 residues: Arginine--tRNA ligase (563 aa).

The 'HIGH' region motif lies at 120-130; it reads PNIAKPFHIGH.

It belongs to the class-I aminoacyl-tRNA synthetase family. As to quaternary structure, monomer.

It localises to the cytoplasm. It catalyses the reaction tRNA(Arg) + L-arginine + ATP = L-arginyl-tRNA(Arg) + AMP + diphosphate. This Clostridium botulinum (strain ATCC 19397 / Type A) protein is Arginine--tRNA ligase.